We begin with the raw amino-acid sequence, 581 residues long: Pentatricopeptide repeat-containing protein At1g34160 (581 aa).

PPR repeat units lie at residues 67-101 (LTND…SSSS), 108-142 (DALT…GLSA), 143-173 (DSLL…MPVR), 174-208 (DVAS…GIRR), 209-239 (SEVT…YSND), 240-270 (NVIV…FTGK), 272-306 (SVVT…GIKP), 307-341 (DDVS…GVER), and 342-372 (NMKH…MSMI). The type E motif stretch occupies residues 377–452 (LWQSLLGASE…IPGLSYIEAK (76 aa)). A type E(+) motif region spans residues 453 to 483 (GTIHEFYNSDKSHEQWREIYEKIDEIRFKIR). The interval 484–581 (EDGYVAQTGL…DGSCSCRDFW (98 aa)) is type DYW motif.

It belongs to the PPR family. PCMP-H subfamily.

This chain is Pentatricopeptide repeat-containing protein At1g34160 (PCMP-H68), found in Arabidopsis thaliana (Mouse-ear cress).